The sequence spans 497 residues: Sestrin homolog (497 aa).

Residues Ser185 and Ser190 each carry the phosphoserine modification. The segment covering 226-241 has biased composition (polar residues); it reads NANPDYDSQTAASSNG. The interval 226 to 255 is disordered; the sequence is NANPDYDSQTAASSNGGAPPDSANAVADGP.

It belongs to the sestrin family. As to quaternary structure, associates with the GATOR2 complex; the interaction is probably direct. Associates with the GATOR1 complex; the interaction is probably indirect and mediated by the GATOR2 complex. Highly expressed in muscle-enriched tissues (at protein level).

The protein resides in the nucleus. Its subcellular location is the cytoplasm. Functions as a negative feedback regulator of mTOR function. The polypeptide is Sestrin homolog (Drosophila melanogaster (Fruit fly)).